A 1032-amino-acid polypeptide reads, in one-letter code: ATPase MORC2 (1032 aa).

An N-acetylalanine modification is found at Ala-2. Residues Asn-39, 87 to 89, and 99 to 105 each bind ATP; these read SAK and QYGNGLK. Asn-39 provides a ligand contact to Mg(2+). Residues 282–362 are a coiled coil; that stretch reads SRFKTRAEQE…KEAKQRALKE (81 aa). Lys-427 contacts ATP. Residues 490-544 form a CW-type zinc finger; the sequence is AMEIPTTIQCDLCLKWRTLPFQLSSVEKDYPDTWVCSMNPDPEQDRCEASEQKQK. Positions 499, 502, 525, and 536 each coordinate Zn(2+). 2 disordered regions span residues 530 to 563 and 577 to 793; these read DPEQ…KQKQ and ALQK…RAQK. Composition is skewed to basic and acidic residues over residues 532–543 and 550–563; these read EQDRCEASEQKQ and FRKD…KQKQ. Residues 547-584 adopt a coiled-coil conformation; that stretch reads LGTFRKDMKTQEEKQKQLTEKIRQQQEKLEALQKTTPI. Residue Thr-582 is modified to Phosphothreonine. Residues Ser-602 and Ser-615 each carry the phosphoserine modification. Residues 627-638 are compositionally biased toward pro residues; sequence SRPPSLPTPRPA. A Glycyl lysine isopeptide (Lys-Gly) (interchain with G-Cter in SUMO2) cross-link involves residue Lys-652. Low complexity predominate over residues 690-704; the sequence is PLVQQLSPSLLPNSK. Ser-696 is modified (phosphoserine). A Glycyl lysine isopeptide (Lys-Gly) (interchain with G-Cter in SUMO2) cross-link involves residue Lys-704. Phosphoserine is present on Ser-705. The span at 711–720 shows a compositional bias: low complexity; sequence SPKVIKTPVV. Lys-716 participates in a covalent cross-link: Glycyl lysine isopeptide (Lys-Gly) (interchain with G-Cter in SUMO2). Phosphoserine is present on residues Ser-725 and Ser-730. Phosphothreonine is present on Thr-733. At Ser-739 the chain carries Phosphoserine; by PAK1. A coiled-coil region spans residues 741–761; the sequence is AVSDEEEVEEEAERRKERCKR. Ser-743 is modified (phosphoserine). Over residues 765–774 the composition is skewed to basic and acidic residues; that stretch reads VVKEEKKDSN. A Glycyl lysine isopeptide (Lys-Gly) (interchain with G-Cter in SUMO2) cross-link involves residue Lys-767. 2 positions are modified to phosphoserine: Ser-777 and Ser-779. Lys-819 is covalently cross-linked (Glycyl lysine isopeptide (Lys-Gly) (interchain with G-Cter in SUMO2)). Positions 850-870 are disordered; that stretch reads RLMKPPSPEHQSLDTQQEGGE. A Glycyl lysine isopeptide (Lys-Gly) (interchain with G-Cter in SUMO2) cross-link involves residue Lys-932. Residues 966–1016 are a coiled coil; it reads QSRADSRAKASEESLRTSERKLRETEEKLQKLRTNIVALLQKVQEDIDINT.

As to quaternary structure, homodimerizes upon ATP-binding and dissociate upon ATP hydrolysis; homodimerization is required for gene silencing. Interacts with HDAC4. Interacts with ACLY. Interacts with TASOR and MPHOSPH8; the interactions associate MORC2 with the HUSH complex which recruits MORC2 to heterochromatic loci. In terms of processing, phosphorylated by PAK1 at Ser-739 upon DNA damage. Phosphorylation is required for ATPase activity and recruitment to damaged chromatin. In terms of tissue distribution, highly expressed in smooth muscle, pancreas and testis.

It is found in the nucleus. Its subcellular location is the cytoplasm. It localises to the cytosol. The protein localises to the chromosome. The protein resides in the nucleus matrix. It catalyses the reaction ATP + H2O = ADP + phosphate + H(+). ATPase activity is dependent of phosphorylation by PAK1 and presence of DNA. Its function is as follows. Essential for epigenetic silencing by the HUSH (human silencing hub) complex. Recruited by HUSH to target site in heterochromatin, the ATPase activity and homodimerization are critical for HUSH-mediated silencing. Represses germ cell-related genes and L1 retrotransposons in collaboration with SETDB1 and the HUSH complex, the silencing is dependent of repressive epigenetic modifications, such as H3K9me3 mark. Silencing events often occur within introns of transcriptionally active genes, and lead to the down-regulation of host gene expression. During DNA damage response, regulates chromatin remodeling through ATP hydrolysis. Upon DNA damage, is phosphorylated by PAK1, both colocalize to chromatin and induce H2AX expression. ATPase activity is required and dependent of phosphorylation by PAK1 and presence of DNA. Recruits histone deacetylases, such as HDAC4, to promoter regions, causing local histone H3 deacetylation and transcriptional repression of genes such as CA9. Exhibits a cytosolic function in lipogenesis, adipogenic differentiation, and lipid homeostasis by increasing the activity of ACLY, possibly preventing its dephosphorylation. In Homo sapiens (Human), this protein is ATPase MORC2.